Consider the following 294-residue polypeptide: Large ribosomal subunit protein uL4m (294 aa).

Residues 120–139 form a disordered region; that stretch reads VRGGGRKPWQQKGSGRARHG. Position 147 is an omega-N-methylarginine (arginine 147).

Belongs to the universal ribosomal protein uL4 family. Component of the mitochondrial ribosome large subunit (39S) which comprises a 16S rRNA and about 50 distinct proteins. Interacts with MIEF1 upstream open reading frame protein.

The protein resides in the mitochondrion. This is Large ribosomal subunit protein uL4m (MRPL4) from Bos taurus (Bovine).